The sequence spans 302 residues: MAGFVYSPYNAYQGYGGNFGQNPHRPQAFPKNKQAAWKSNKSSEPPDYLDHFQRAQLKAILSQVNPNLTPRLRKVNTKEMGVQVNPRVDTGVQCSLGPRTLRRPPPPPSSPVKPTDCARFSRPVAVYSPVVDRRLFSLPQGGRLPKKSLPAPDSQSQPLKDRGPSPEEKEPETKEALEKSPVPGAEEPNEEEPNKPAFQFLEQKYGYFHCKDCKTRWESAYVWCISGSNKVYFKQLCRKCQKGFNPYRVEVIQCQVCAKTRCSCPQKKRHIDLKRPHRQELCGRCKNKKLSCDNTYSYKYIV.

Disordered stretches follow at residues 15–46 (YGGN…SEPP), 88–117 (VDTG…PTDC), and 138–195 (LPQG…EPNK). The span at 159-178 (LKDRGPSPEEKEPETKEALE) shows a compositional bias: basic and acidic residues. Residues 203–288 (QKYGYFHCKD…QELCGRCKNK (86 aa)) form a 3CxxC-type zinc finger.

It belongs to the ZAR1 family. In terms of tissue distribution, oocyte-specific.

The protein localises to the cytoplasm. It is found in the cytoplasmic ribonucleoprotein granule. MRNA-binding protein required for maternal mRNA storage, translation and degradation during oocyte maturation. Probably promotes formation of some phase-separated membraneless compartment that stores maternal mRNAs in oocytes: acts by undergoing liquid-liquid phase separation upon binding to maternal mRNAs. Binds to the 3'-UTR of maternal mRNAs, inhibiting their translation. This Xenopus laevis (African clawed frog) protein is Zygote arrest protein 2.S.